Consider the following 545-residue polypeptide: Phenylalanine--tRNA ligase beta subunit (545 aa).

Residues 268–343 (FLHKIQNVRE…MSIGYNNLEP (76 aa)) form the B5 domain. Aspartate 321, aspartate 327, glutamate 330, and aspartate 331 together coordinate Mg(2+).

This sequence belongs to the phenylalanyl-tRNA synthetase beta subunit family. Type 2 subfamily. In terms of assembly, tetramer of two alpha and two beta subunits. Requires Mg(2+) as cofactor.

It is found in the cytoplasm. It catalyses the reaction tRNA(Phe) + L-phenylalanine + ATP = L-phenylalanyl-tRNA(Phe) + AMP + diphosphate + H(+). This Saccharolobus islandicus (strain L.S.2.15 / Lassen #1) (Sulfolobus islandicus) protein is Phenylalanine--tRNA ligase beta subunit.